A 343-amino-acid polypeptide reads, in one-letter code: HTH-type transcriptional regulator GntR (343 aa).

The HTH lacI-type domain occupies 16–70 (PTLNEVARRAGVSPITASRALRGVASVAEELAQKVRDAARELGYVANPAARALAS). A DNA-binding region (H-T-H motif) is located at residues 18–37 (LNEVARRAGVSPITASRALR).

With respect to regulation, free GntR fails to recognize gluconate and 6-phosphogluconate, whereas the GntR/DNA complexes recognize both ligands. It is therefore likely that GntR DNA binding induces structural changes that permit GntR to recognize effectors. In terms of biological role, involved in the regulation of glucose metabolism. Represses its own expression as well as that of the gluconate permease GntP. It employs an effector mediated de-repression mechanism: in the absence of ligand, GntR binds to the gntR and gntP promoters and represses their expression. The release of promoter bound GntR is induced by gluconate and 6-phosphogluconate that bind with similar apparent affinities to the GntR/DNA complex. The release of GntR leads to transcription of the genes. The chain is HTH-type transcriptional regulator GntR from Pseudomonas aeruginosa (strain ATCC 15692 / DSM 22644 / CIP 104116 / JCM 14847 / LMG 12228 / 1C / PRS 101 / PAO1).